We begin with the raw amino-acid sequence, 603 residues long: UvrABC system protein C (603 aa).

Positions Asn13–Ile92 constitute a GIY-YIG domain. In terms of domain architecture, UVR spans Asn202–Thr237.

It belongs to the UvrC family. As to quaternary structure, interacts with UvrB in an incision complex.

The protein resides in the cytoplasm. Its function is as follows. The UvrABC repair system catalyzes the recognition and processing of DNA lesions. UvrC both incises the 5' and 3' sides of the lesion. The N-terminal half is responsible for the 3' incision and the C-terminal half is responsible for the 5' incision. The protein is UvrABC system protein C of Desulfatibacillum aliphaticivorans.